The chain runs to 660 residues: Leucine-rich repeat transmembrane protein FLRT2 (660 aa).

A signal peptide spans 1–35 (MGLQTTKWPSHGAFFLKSWLIISLGLYSQVSKLLA). 2 cysteine pairs are disulfide-bonded: Cys36–Cys42 and Cys40–Cys49. The LRRNT domain occupies 36 to 63 (CPSVCRCDRNFVYCNERSLTSVPLGIPE). The Extracellular segment spans residues 36–541 (CPSVCRCDRN…TTSHSMGSPF (506 aa)). LRR repeat units lie at residues 64-85 (GVTVLYLHNNQINNAGFPAELH), 89-109 (SVHTVYLYGNQLDEFPMNLPK), 110-131 (NVRVLHLQENNIQTISRAALAQ), 134-155 (KLEELHLDDNSISTVGVEDGAF), 160-181 (SLKLLFLSKNHLSSVPVGLPVD), 182-202 (LQELRVDENRIAVISDMAFQN), 205-225 (SLERLIVDGNLLTNKGIAEGT), 231-252 (KLKEFSIVRNSLSHPPPDLPGT), 253-274 (HLIRLYLQDNQINHIPLTAFSN), and 277-298 (KLERLDISNNQLRMLTQGVFDN). N-linked (GlcNAc...) asparagine glycosylation is present at Asn202. Asn298 carries an N-linked (GlcNAc...) asparagine glycan. In terms of domain architecture, LRRCT spans 310-362 (NPWFCDCSIKWVTEWLKYIPSSLNVRGFMCQGPEQVRGMAVRELNMNLLSCPT). 2 disulfides stabilise this stretch: Cys314-Cys339 and Cys316-Cys360. The segment covering 373–409 (APSTASPTTQPPTLSIPNPSRSYTPPTPTTSKLPTIP) has biased composition (low complexity). Positions 373–413 (APSTASPTTQPPTLSIPNPSRSYTPPTPTTSKLPTIPDWDG) are disordered. One can recognise a Fibronectin type-III domain in the interval 419–517 (PPISERIQLS…ICSEATTHAS (99 aa)). Residues Asn433 and Asn521 are each glycosylated (N-linked (GlcNAc...) asparagine). The chain crosses the membrane as a helical span at residues 542–562 (LLAGLIGGAVIFVLVVLLSVF). The Cytoplasmic segment spans residues 563–660 (CWHMHKKGRY…SVPDLEHCHT (98 aa)).

In terms of assembly, self-associates (via leucine-rich repeats), giving rise to homooligomers. Interacts with FGFR1. Interacts with FGFR2. Interacts (via extracellular domain) with ADGRL1/LPHN1. Interacts (via extracellular domain) with ADGRL3 (via olfactomedin-like domain). Interacts (via extracellular domain) with UNC5D (via the first Ig-like domain). Can also interact (via extracellular domain) with UNC5B, but with much lower affinity. Interacts (via extracellular domain) with FN1. Post-translationally, N-glycosylated. In terms of processing, proteolytic cleavage in the juxtamembrane region gives rise to a soluble ectodomain. Cleavage is probably effected by a metalloprotease. Expressed in pancreas, skeletal muscle, brain, and heart.

It localises to the cell membrane. The protein resides in the endoplasmic reticulum membrane. The protein localises to the cell junction. It is found in the focal adhesion. Its subcellular location is the secreted. It localises to the extracellular space. The protein resides in the extracellular matrix. The protein localises to the microsome membrane. It is found in the synapse. Its subcellular location is the synaptosome. In terms of biological role, functions in cell-cell adhesion, cell migration and axon guidance. Mediates cell-cell adhesion via its interactions with ADGRL3 and probably also other latrophilins that are expressed at the surface of adjacent cells. May play a role in the migration of cortical neurons during brain development via its interaction with UNC5D. Mediates axon growth cone collapse and plays a repulsive role in neuron guidance via its interaction with UNC5D, and possibly also other UNC-5 family members. Plays a role in fibroblast growth factor-mediated signaling cascades. Required for normal organization of the cardiac basement membrane during embryogenesis, and for normal embryonic epicardium and heart morphogenesis. The protein is Leucine-rich repeat transmembrane protein FLRT2 (FLRT2) of Homo sapiens (Human).